The following is a 414-amino-acid chain: Mannan endo-1,4-beta-mannosidase 2 (414 aa).

Residues 1–25 (MAYFQRLISCIFVLFLLSLAFACEA) form the signal peptide. Substrate is bound by residues W95 and N210. E211 functions as the Proton donor in the catalytic mechanism. Y288 contributes to the substrate binding site. The active-site Nucleophile is E328. Substrate is bound at residue W370.

Belongs to the glycosyl hydrolase 5 (cellulase A) family.

The protein localises to the secreted. The catalysed reaction is Random hydrolysis of (1-&gt;4)-beta-D-mannosidic linkages in mannans, galactomannans and glucomannans.. Functionally, possesses endo-beta-mannanase activity in vitro. May be involved in seed germination by weakening the endosperm cap prior to radicle emergence. The sequence is that of Mannan endo-1,4-beta-mannosidase 2 (MAN2) from Solanum lycopersicum (Tomato).